The chain runs to 280 residues: tRNA dimethylallyltransferase (280 aa).

9–16 serves as a coordination point for ATP; it reads GPTGSGKT. Residue 11 to 16 coordinates substrate; it reads TGSGKT. Residues 34-37 are interaction with substrate tRNA; that stretch reads DSVS.

Belongs to the IPP transferase family. In terms of assembly, monomer. The cofactor is Mg(2+).

The catalysed reaction is adenosine(37) in tRNA + dimethylallyl diphosphate = N(6)-dimethylallyladenosine(37) in tRNA + diphosphate. Its function is as follows. Catalyzes the transfer of a dimethylallyl group onto the adenine at position 37 in tRNAs that read codons beginning with uridine, leading to the formation of N6-(dimethylallyl)adenosine (i(6)A). The sequence is that of tRNA dimethylallyltransferase from Acholeplasma laidlawii (strain PG-8A).